Consider the following 93-residue polypeptide: Cobalt transport protein CbiN (93 aa).

2 consecutive transmembrane segments (helical) span residues 5-25 (LILL…DHGG) and 62-82 (SLLF…ILGY).

It belongs to the CbiN family. As to quaternary structure, forms an energy-coupling factor (ECF) transporter complex composed of an ATP-binding protein (A component, CbiO), a transmembrane protein (T component, CbiQ) and 2 possible substrate-capture proteins (S components, CbiM and CbiN) of unknown stoichimetry.

It localises to the cell inner membrane. It functions in the pathway cofactor biosynthesis; adenosylcobalamin biosynthesis. In terms of biological role, part of the energy-coupling factor (ECF) transporter complex CbiMNOQ involved in cobalt import. This chain is Cobalt transport protein CbiN, found in Citrobacter koseri (strain ATCC BAA-895 / CDC 4225-83 / SGSC4696).